The following is a 422-amino-acid chain: UDP-N-acetylglucosamine 1-carboxyvinyltransferase (422 aa).

22-23 (KN) contributes to the phosphoenolpyruvate binding site. Arg92 is a binding site for UDP-N-acetyl-alpha-D-glucosamine. Cys116 acts as the Proton donor in catalysis. Cys116 bears the 2-(S-cysteinyl)pyruvic acid O-phosphothioketal mark. Residues 121–125 (RPVDL), Asp307, and Leu329 each bind UDP-N-acetyl-alpha-D-glucosamine.

Belongs to the EPSP synthase family. MurA subfamily.

It localises to the cytoplasm. It carries out the reaction phosphoenolpyruvate + UDP-N-acetyl-alpha-D-glucosamine = UDP-N-acetyl-3-O-(1-carboxyvinyl)-alpha-D-glucosamine + phosphate. Its pathway is cell wall biogenesis; peptidoglycan biosynthesis. Its function is as follows. Cell wall formation. Adds enolpyruvyl to UDP-N-acetylglucosamine. The protein is UDP-N-acetylglucosamine 1-carboxyvinyltransferase of Aliarcobacter butzleri (strain RM4018) (Arcobacter butzleri).